The sequence spans 536 residues: Apoptosis inhibitor 5 homolog (536 aa).

Residues 462 to 536 are disordered; the sequence is ITFGEKAAAN…GYRNRRFNKY (75 aa). Residues 472–487 are compositionally biased toward basic and acidic residues; it reads GKDKDQEPEKKSRPSN. Residues 498–507 are compositionally biased toward polar residues; it reads KYSNKVNQSY. The segment covering 516 to 528 has biased composition (gly residues); that stretch reads RGGGGGGGSGGGY.

Belongs to the API5 family.

The protein localises to the nucleus. Its function is as follows. Antiapoptotic factor. Also known to efficiently suppress E2F1-induced apoptosis. The chain is Apoptosis inhibitor 5 homolog from Drosophila melanogaster (Fruit fly).